A 91-amino-acid polypeptide reads, in one-letter code: Ragulator complex protein LAMTOR5 (91 aa).

The protein belongs to the LAMTOR5 family. As to quaternary structure, part of the Ragulator complex composed of lamtor1, lamtor2, lamtor3, lamtor4 and lamtor5. The Ragulator complex interacts with slc38a9; the probable amino acid sensor. Component of the lysosomal folliculin complex (LFC).

It is found in the cytoplasm. It localises to the lysosome. As part of the Ragulator complex it is involved in amino acid sensing and activation of mTORC1, a signaling complex promoting cell growth in response to growth factors, energy levels, and amino acids. Activated by amino acids through a mechanism involving the lysosomal V-ATPase, the Ragulator plays a dual role for the small GTPases Rag (RagA/RRAGA, RagB/RRAGB, RagC/RRAGC and/or RagD/RRAGD): it (1) acts as a guanine nucleotide exchange factor (GEF), activating the small GTPases Rag and (2) mediates recruitment of Rag GTPases to the lysosome membrane. Activated Ragulator and Rag GTPases function as a scaffold recruiting mTORC1 to lysosomes where it is in turn activated. The polypeptide is Ragulator complex protein LAMTOR5 (lamtor5) (Xenopus tropicalis (Western clawed frog)).